We begin with the raw amino-acid sequence, 337 residues long: Probable uridine nucleosidase 2 (337 aa).

The active site involves histidine 260.

The protein belongs to the IUNH family.

The protein resides in the cytoplasm. The enzyme catalyses uridine + H2O = D-ribose + uracil. In terms of biological role, involved in pyrimidine breakdown. The chain is Probable uridine nucleosidase 2 (URH2) from Oryza sativa subsp. japonica (Rice).